The sequence spans 461 residues: Probable metabolite transport protein CsbC (461 aa).

Residues 1–14 (MKKDTRKYMIYFFG) lie on the Cytoplasmic side of the membrane. Residues 15 to 35 (ALGGLLYGYDTGVISGALLFI) form a helical membrane-spanning segment. The Extracellular portion of the chain corresponds to 36 to 38 (NND). Residues 39–59 (IPLTTLTEGLVVSMLLLGAIF) traverse the membrane as a helical segment. Over 60-76 (GSALSGTCSDRWGRRKV) the chain is Cytoplasmic. The helical transmembrane segment at 77-97 (VFVLSIIFIIGALACAFSQTI) threads the bilayer. Residues 98-104 (GMLIASR) are Extracellular-facing. Residues 105–125 (VILGLAVGGSTALVPVYLSEM) traverse the membrane as a helical segment. Over 126-139 (APTKIRGTLGTMNN) the chain is Cytoplasmic. A helical membrane pass occupies residues 140-160 (LMIVTGILLAYIVNYLFTPFE). Residues 161–163 (AWR) lie on the Extracellular side of the membrane. The chain crosses the membrane as a helical span at residues 164–184 (WMVGLAAVPAVLLLIGIAFMP). At 185–241 (ESPRWLVKRGSEEEARRIMNITHDPKDIEMELAEMKQGEAEKKETTLGVLKAKWIRP) the chain is on the cytoplasmic side. The helical transmembrane segment at 242 to 262 (MLLIGVGLAIFQQAVGINTVI) threads the bilayer. Over 263–280 (YYAPTIFTKAGLGTSASA) the chain is Extracellular. A helical membrane pass occupies residues 281–301 (LGTMGIGILNVIMCITAMILI). Topologically, residues 302-308 (DRVGRKK) are cytoplasmic. Residues 309-329 (LLIWGSVGITLSLAALSGVLL) form a helical membrane-spanning segment. At 330-341 (TLGLSASTAWMT) the chain is on the extracellular side. A helical transmembrane segment spans residues 342-362 (VVFLGVYIVFYQATWGPVVWV). Topologically, residues 363–378 (LMPELFPSKARGAATG) are cytoplasmic. Residues 379 to 399 (FTTLVLSAANLIVSLVFPLML) traverse the membrane as a helical segment. Residues 400–402 (SAM) are Extracellular-facing. Residues 403–423 (GIAWVFMVFSVICLLSFFFAF) form a helical membrane-spanning segment. The Cytoplasmic portion of the chain corresponds to 424–461 (YMVPETKGKSLEEIEASLKKRFKKKKSTQNQVLNERTL).

The protein belongs to the major facilitator superfamily. Sugar transporter (TC 2.A.1.1) family.

The protein localises to the cell membrane. Functionally, could serve either a nutritional or an osmotic protection function. In Bacillus subtilis (strain 168), this protein is Probable metabolite transport protein CsbC (csbC).